The following is a 320-amino-acid chain: L-lactate dehydrogenase 2 (320 aa).

NAD(+) is bound by residues valine 16, aspartate 37, lysine 42, and tyrosine 69. Arginine 94 lines the substrate pocket. NAD(+)-binding positions include serine 107, 124–126, and threonine 149; that span reads VTN. 126-129 serves as a coordination point for substrate; the sequence is NPVD. Residue 154 to 157 coordinates substrate; that stretch reads DTAR. The beta-D-fructose 1,6-bisphosphate site is built by arginine 159 and histidine 174. Residue histidine 181 is the Proton acceptor of the active site. Residue threonine 235 coordinates substrate.

Belongs to the LDH/MDH superfamily. LDH family. Homotetramer.

It localises to the cytoplasm. The catalysed reaction is (S)-lactate + NAD(+) = pyruvate + NADH + H(+). Its pathway is fermentation; pyruvate fermentation to lactate; (S)-lactate from pyruvate: step 1/1. Its activity is regulated as follows. Allosterically activated by fructose 1,6-bisphosphate (FBP). Functionally, catalyzes the conversion of lactate to pyruvate. The sequence is that of L-lactate dehydrogenase 2 from Clostridium acetobutylicum (strain ATCC 824 / DSM 792 / JCM 1419 / IAM 19013 / LMG 5710 / NBRC 13948 / NRRL B-527 / VKM B-1787 / 2291 / W).